Reading from the N-terminus, the 833-residue chain is Protein PAT1 homolog 1 (833 aa).

3 disordered regions span residues 279–313, 398–427, and 492–549; these read DMREDNKFSHPPPGFNQNVQPRMDPSLSPGGMHGM, NIRQNGPQFSHPSGPHSPGNRVQRKHSGMP, and EEAT…DKKL. The span at 303–313 shows a compositional bias: low complexity; the sequence is PSLSPGGMHGM. Residues 398 to 408 show a composition bias toward polar residues; it reads NIRQNGPQFSH.

It belongs to the PAT1 family.

It localises to the cytoplasm. The protein resides in the P-body. Its function is as follows. RNA-binding protein involved in deadenylation-dependent decapping of mRNAs, leading to the degradation of mRNAs. Acts as a scaffold protein that connects deadenylation and decapping machinery. Required for the recruitment of P-body components such as cgh-1 in somatic blastomeres. May play a role in recruiting the decapping enzyme dcap-1 to cytoplasmic puncta in the cell body of the posterior touch receptor neuron, PLM. In Caenorhabditis elegans, this protein is Protein PAT1 homolog 1.